The primary structure comprises 532 residues: Putative sodium-dependent excitatory amino acid transporter glt-3 (532 aa).

Residues 1-5 lie on the Cytoplasmic side of the membrane; sequence MGMKK. 3 consecutive transmembrane segments (helical) span residues 6–26, 46–66, and 83–103; these read DLLL…GFVI, FMQI…ISAL, and IYYM…VSSI. The Extracellular segment spans residues 104–181; that stretch reads HPGDPELIHE…SEVLHKQTLT (78 aa). N-linked (GlcNAc...) asparagine glycosylation is found at Asn-164 and Asn-169. Transmembrane regions (helical) follow at residues 182-202, 222-242, 264-284, 352-372, and 383-402; these read YTNE…GIIL, IIMR…LSLV, VTVI…LYFL, AVAV…MDLV, and IGSG…LTTV.

It belongs to the dicarboxylate/amino acid:cation symporter (DAACS) (TC 2.A.23) family.

The protein localises to the membrane. The protein is Putative sodium-dependent excitatory amino acid transporter glt-3 (glt-3) of Caenorhabditis elegans.